A 502-amino-acid chain; its full sequence is Zinc finger C3HC-type protein 1 (502 aa).

Ala2 is modified (N-acetylalanine). Residue Ser24 is modified to Phosphoserine. Thr28 carries the post-translational modification Phosphothreonine. Residues 35 to 74 (LIDEGIAPEEGGVDAQDTSATSQSVNGSPQAEQPSLESTS) form a disordered region. Over residues 50-72 (QDTSATSQSVNGSPQAEQPSLES) the composition is skewed to polar residues. Ser58 and Ser62 each carry phosphoserine. Residue Thr84 is modified to Phosphothreonine. The segment at 102 to 156 (CAKYGWVTVECDMLKCSSCQAFLCASLQPAFDFDRYKQRCAELKKALCTAHEKFC) adopts a C3HC-type zinc-finger fold. A disordered region spans residues 302-423 (SSPIPGLEGR…SSRSFFDPTS (122 aa)). 2 positions are modified to phosphoserine: Ser321 and Ser329. Thr333 carries the phosphothreonine modification. Phosphoserine is present on residues Ser338, Ser344, Ser354, Ser359, and Ser370. Over residues 351 to 360 (RTRSWDSSSP) the composition is skewed to polar residues. A compositionally biased stretch (low complexity) spans 371–380 (PTTRTRPVTR). Ser381 carries the post-translational modification Phosphoserine. At Thr384 the chain carries Phosphothreonine. The residue at position 395 (Ser395) is a Phosphoserine. A Nuclear localization signal motif is present at residues 396 to 402 (PLRKAKR). Ser407 and Ser483 each carry phosphoserine. Residues 407–422 (SSSSSDTSSRSFFDPT) are compositionally biased toward low complexity.

Interacts with TPR; this interaction mediates ZC3HC1 nuclear envelopes (NE)-association but also required for proper positioning of a substantial amount of TPR at the nuclear basket (NB). Post-translationally, phosphorylated. May also be weakly phosphorylated on Tyr residues.

It localises to the nucleus. The protein resides in the nucleus envelope. Its function is as follows. Required for proper positioning of a substantial amount of TPR at the nuclear basket (NB) through interaction with TPR. The polypeptide is Zinc finger C3HC-type protein 1 (ZC3HC1) (Pongo abelii (Sumatran orangutan)).